We begin with the raw amino-acid sequence, 88 residues long: Phosphocarrier protein HPr (88 aa).

In terms of domain architecture, HPr spans 2–88 (AQKTFKVTAD…ETMKSEGLGE (87 aa)). Ser-12 is modified (phosphoserine). Residue His-15 is the Pros-phosphohistidine intermediate; alternate of the active site. A Tele-phosphohistidine; alternate modification is found at His-15. Ser-46 is modified (phosphoserine; by HPrK/P).

Belongs to the HPr family. Post-translationally, phosphorylated during sporulation.

It localises to the cytoplasm. Its activity is regulated as follows. Phosphorylation on Ser-46 inhibits the phosphoryl transfer from enzyme I to HPr. General (non sugar-specific) component of the phosphoenolpyruvate-dependent sugar phosphotransferase system (sugar PTS). This major carbohydrate active-transport system catalyzes the phosphorylation of incoming sugar substrates concomitantly with their translocation across the cell membrane. The phosphoryl group from phosphoenolpyruvate (PEP) is transferred to the phosphoryl carrier protein HPr by enzyme I. Phospho-HPr then transfers it to the PTS EIIA domain. Functionally, P-Ser-HPr interacts with the catabolite control protein A (CcpA), forming a complex that binds to DNA at the catabolite response elements cre, operator sites preceding a large number of catabolite-regulated genes. Thus, P-Ser-HPr is a corepressor in carbon catabolite repression (CCR), a mechanism that allows bacteria to coordinate and optimize the utilization of available carbon sources. P-Ser-HPr also plays a role in inducer exclusion, in which it probably interacts with several non-PTS permeases and inhibits their transport activity. The protein is Phosphocarrier protein HPr (ptsH) of Bacillus subtilis (strain 168).